Reading from the N-terminus, the 215-residue chain is 3,4-dihydroxy-2-butanone 4-phosphate synthase (215 aa).

D-ribulose 5-phosphate contacts are provided by residues 38–39 (RE), Asp43, 151–155 (RRGHT), and Glu175. Glu39 is a binding site for Mg(2+). A Mg(2+)-binding site is contributed by His154.

It belongs to the DHBP synthase family. As to quaternary structure, homodimer. Mg(2+) is required as a cofactor. Requires Mn(2+) as cofactor.

The catalysed reaction is D-ribulose 5-phosphate = (2S)-2-hydroxy-3-oxobutyl phosphate + formate + H(+). It functions in the pathway cofactor biosynthesis; riboflavin biosynthesis; 2-hydroxy-3-oxobutyl phosphate from D-ribulose 5-phosphate: step 1/1. Catalyzes the conversion of D-ribulose 5-phosphate to formate and 3,4-dihydroxy-2-butanone 4-phosphate. In Haemophilus influenzae (strain PittGG), this protein is 3,4-dihydroxy-2-butanone 4-phosphate synthase.